Here is a 123-residue protein sequence, read N- to C-terminus: Undecaprenol kinase (123 aa).

The Cytoplasmic portion of the chain corresponds to M1–N33. The chain crosses the membrane as a helical span at residues F34–V51. Topologically, residues E52–E57 are extracellular. The chain crosses the membrane as a helical span at residues W58 to L74. The Cytoplasmic portion of the chain corresponds to N75–A99. The helical transmembrane segment at A100 to L120 threads the bilayer. Residues P121 to L123 lie on the Extracellular side of the membrane.

Belongs to the bacterial diacylglycerol kinase family.

The protein resides in the cell membrane. It catalyses the reaction di-trans,octa-cis-undecaprenol + ATP = di-trans,octa-cis-undecaprenyl phosphate + ADP + H(+). Its function is as follows. Catalyzes the phosphorylation of undecaprenol in vitro, which is probably the physiological substrate. Exhibits no detectable activity against other substrates such as monoacylglycerol, ceramide, or diacylglycerol (DAG). Appears indispensable for the maintenance of spore stability and viability in B.subtilis. The protein is Undecaprenol kinase (dgkA) of Bacillus subtilis (strain 168).